A 100-amino-acid chain; its full sequence is Small ribosomal subunit protein uS14c (100 aa).

It belongs to the universal ribosomal protein uS14 family. In terms of assembly, part of the 30S ribosomal subunit.

Its subcellular location is the plastid. It is found in the chloroplast. Its function is as follows. Binds 16S rRNA, required for the assembly of 30S particles. This is Small ribosomal subunit protein uS14c from Cryptomeria japonica (Japanese cedar).